The sequence spans 252 residues: Uridylate kinase (252 aa).

ATP is bound at residue 27–30 (KLGG). Gly-68 provides a ligand contact to UMP. Positions 69 and 73 each coordinate ATP. Residues Asp-88 and 149-156 (MGLPYFST) each bind UMP. The ATP site is built by Tyr-182 and Asp-185.

The protein belongs to the UMP kinase family. Homohexamer.

Its subcellular location is the cytoplasm. It carries out the reaction UMP + ATP = UDP + ADP. The protein operates within pyrimidine metabolism; CTP biosynthesis via de novo pathway; UDP from UMP (UMPK route): step 1/1. With respect to regulation, inhibited by UTP. Functionally, catalyzes the reversible phosphorylation of UMP to UDP. The chain is Uridylate kinase from Mycobacterium sp. (strain JLS).